A 42-amino-acid polypeptide reads, in one-letter code: Statherin (42 aa).

The segment at 1–6 is hydroxyapatite-binding; inhibits crystal growth; the sequence is DSSEEK. Serine 2 and serine 3 each carry phosphoserine. Residues 18–42 are disordered; it reads RYGPYQPFVPPPLYPQPYQPYQPQY. The segment at 18-42 is hydrophobic; inhibits precipitation of calcium phosphate salts; the sequence is RYGPYQPFVPPPLYPQPYQPYQPQY. Residues 24 to 42 show a composition bias toward pro residues; it reads PFVPPPLYPQPYQPYQPQY.

The protein belongs to the histatin/statherin family. As to expression, secreted by parotid and submandibular glands.

The protein resides in the secreted. Its function is as follows. Salivary protein that stabilizes saliva supersaturated with calcium salts by inhibiting the precipitation of calcium phosphate salts. It also modulates hydroxyapatite crystal formation on the tooth surface. The chain is Statherin (STATH) from Macaca arctoides (Stump-tailed macaque).